A 376-amino-acid chain; its full sequence is Heat-inducible transcription repressor HrcA (376 aa).

Belongs to the HrcA family.

Functionally, negative regulator of class I heat shock genes (grpE-dnaK-dnaJ and groELS operons). Prevents heat-shock induction of these operons. This is Heat-inducible transcription repressor HrcA from Nostoc punctiforme (strain ATCC 29133 / PCC 73102).